Consider the following 261-residue polypeptide: Lytic polysaccharide monooxygenase-like protein X325 (261 aa).

Residues 1–17 (MQLSALALATLLATANA) form the signal peptide. Residues His-18, His-64, and Asp-133 each coordinate Cu(2+). Disulfide bonds link Cys-39–Cys-139 and Cys-108–Cys-155. 2 N-linked (GlcNAc...) asparagine glycosylation sites follow: Asn-157 and Asn-183. A disordered region spans residues 174 to 210 (LAENTQGSGNSSGHAHGSSGSGSASASKTDSKSSAAS). Residues 180–210 (GSGNSSGHAHGSSGSGSASASKTDSKSSAAS) show a composition bias toward low complexity. Residue Asn-238 is the site of GPI-anchor amidated asparagine attachment. A propeptide spans 239-261 (SGSLAYVNGALAIGGVVAAALLI) (removed in mature form).

It belongs to the X325 family. Cu(2+) is required as a cofactor.

It localises to the cell membrane. Functionally, lytic polysaccharide monooxygenase-like protein that has diverged to biological functions other than polysaccharide degradation since it does not perform oxidative cleavage of polysaccharides. Acts as a cell surface-bound protein that functions in the copper-accumulation pathway. The protein is Lytic polysaccharide monooxygenase-like protein X325 of Yarrowia lipolytica (strain CLIB 122 / E 150) (Yeast).